The sequence spans 464 residues: Methionine aminopeptidase 2 (464 aa).

A disordered region spans residues 1–86; that stretch reads MGSKTPGNHR…RKKKKKNTKE (86 aa). The segment covering 43 to 54 has biased composition (acidic residues); sequence GESEGGEDEDDD. The segment covering 72-83 has biased composition (basic residues); that stretch reads KRNKRRKKKKKN. A substrate-binding site is contributed by H216. 3 residues coordinate a divalent metal cation: D237, D248, and H317. H325 is a substrate binding site. Residues E350 and E445 each coordinate a divalent metal cation.

The protein belongs to the peptidase M24A family. Methionine aminopeptidase eukaryotic type 2 subfamily. Co(2+) serves as cofactor. It depends on Zn(2+) as a cofactor. The cofactor is Mn(2+). Fe(2+) is required as a cofactor.

Its subcellular location is the cytoplasm. It catalyses the reaction Release of N-terminal amino acids, preferentially methionine, from peptides and arylamides.. Functionally, cotranslationally removes the N-terminal methionine from nascent proteins. The N-terminal methionine is often cleaved when the second residue in the primary sequence is small and uncharged (Met-Ala-, Cys, Gly, Pro, Ser, Thr, or Val). The sequence is that of Methionine aminopeptidase 2 from Ajellomyces capsulatus (strain NAm1 / WU24) (Darling's disease fungus).